Here is a 100-residue protein sequence, read N- to C-terminus: EKC/KEOPS complex subunit GON7 (100 aa).

Methionine 1 is subject to N-acetylmethionine. Residues 61–100 (AAAPDEDLDGDDEDDAEDENNIDNRTNFDGPSAKRPKTPS) form a disordered region. Over residues 64-81 (PDEDLDGDDEDDAEDENN) the composition is skewed to acidic residues.

Component of the EKC/KEOPS complex composed of at least GON7, TP53RK, TPRKB, OSGEP and LAGE3; the whole complex dimerizes.

It localises to the nucleus. Component of the EKC/KEOPS complex that is required for the formation of a threonylcarbamoyl group on adenosine at position 37 (t(6)A37) in tRNAs that read codons beginning with adenine. The complex is probably involved in the transfer of the threonylcarbamoyl moiety of threonylcarbamoyl-AMP (TC-AMP) to the N6 group of A37. GON7 plays a supporting role to the catalytic subunit OSGEP in the complex. The sequence is that of EKC/KEOPS complex subunit GON7 from Homo sapiens (Human).